A 75-amino-acid chain; its full sequence is UPF0352 protein plu2871 (75 aa).

It belongs to the UPF0352 family.

The protein is UPF0352 protein plu2871 of Photorhabdus laumondii subsp. laumondii (strain DSM 15139 / CIP 105565 / TT01) (Photorhabdus luminescens subsp. laumondii).